Consider the following 145-residue polypeptide: Putative nickel-responsive regulator (145 aa).

Ni(2+) contacts are provided by H77, H88, H90, and C96.

The protein belongs to the transcriptional regulatory CopG/NikR family. Ni(2+) is required as a cofactor.

Functionally, transcriptional regulator. The sequence is that of Putative nickel-responsive regulator from Rhizobium rhizogenes (strain K84 / ATCC BAA-868) (Agrobacterium radiobacter).